Consider the following 159-residue polypeptide: MSLVTVGIGDLAVTGDPRAVIVTHGLGSCIALVAWDPGLRVGGMLHFQLPASALSPERALDAPGTFADTGIPLLFHRLYARGCRKEALVVKAAGGGSFNDRGGAFDIGRRNHAAMWRILRHARVAVVAEDVGGSRSRTVRLFLDSGRVTVQSGDQVAPL.

The protein belongs to the CheD family.

It carries out the reaction L-glutaminyl-[protein] + H2O = L-glutamyl-[protein] + NH4(+). Probably deamidates glutamine residues to glutamate on methyl-accepting chemotaxis receptors (MCPs), playing an important role in chemotaxis. The polypeptide is Probable chemoreceptor glutamine deamidase CheD 2 (Anaeromyxobacter dehalogenans (strain 2CP-C)).